A 194-amino-acid chain; its full sequence is Adenylate kinase (194 aa).

11–16 (GSGKGT) is an ATP binding site. Residues 31–60 (STGELLRAEIKAQTELGQAAAGYINEGHLV) are NMP. Residues threonine 32, arginine 37, 58 to 60 (HLV), 86 to 89 (GFPR), and glutamine 93 each bind AMP. An LID region spans residues 127-137 (NRGKVSGRSDD). Arginine 128 contributes to the ATP binding site. 2 residues coordinate AMP: arginine 134 and arginine 145. Position 173 (glycine 173) interacts with ATP.

It belongs to the adenylate kinase family. In terms of assembly, monomer.

The protein resides in the cytoplasm. It carries out the reaction AMP + ATP = 2 ADP. It functions in the pathway purine metabolism; AMP biosynthesis via salvage pathway; AMP from ADP: step 1/1. Functionally, catalyzes the reversible transfer of the terminal phosphate group between ATP and AMP. Plays an important role in cellular energy homeostasis and in adenine nucleotide metabolism. In Porphyromonas gingivalis (strain ATCC BAA-308 / W83), this protein is Adenylate kinase.